The primary structure comprises 1659 residues: MSLSHLTLDQYYEIQCNELEAIRSIYMDDFTDLTKRKSSWDKQPQIIFEITLRSVDKEPVESSITLHFAMTPMYPYTAPEIEFKNVQNVMDSQLQMLKSEFKKIHNTSRGQEIIFEITSFTQEKLDEFQNVVNTQSLEDDRLQRIKETKEQLEKEEREKQQETIKKRSDEQRRIDEIVQRELEKRQDDDDDLLFNRTTQLDLQPPSEWVASGEAIVFSKTIKAKLPNNSMFKFKAVVNPKPIKLTSDIFSFSKQFLVKPYIPPESPLADFLMSSEMMENFYYLLSEIELDNSYFNTSNGKKEIANLEKELETVLKAKHDNVNRLFGYTVERMGRNNATFVWKIRLLTEYCNYYPLGDLIQSVGFVNLATARIWMIRLLEGLEAIHKLGIVHKCINLETVILVKDADFGSTIPKLVHSTYGYTVLNMLSRYPNKNGSSVELSPSTWIAPELLKFNNAKPQRLTDIWQLGVLFIQIISGSDIVMNFETPQEFLDSTSMDETLYDLLSKMLNNDPKKRLGTLELLPMKFLRTNIDSTINRFNLVSESVNSNSLELTPGDTITVRGNGGRTLSQSSIRRRSFNVGSRFSSINPATRSRYASDFEEIAVLGQGAFGQVVKARNALDSRYYAIKKIRHTEEKLSTILSEVMLLASLNHQYVVRYYAAWLEEDSMDENVFESTDEESDLSESSSDFEENDLLDQSSIFKNRTNHDLDNSNWDFISGSGYPDIVFENSSRDDENEDLDHDTSSTSSSESQDDTDKESKSIQNVPRRRNFVKPMTAVKKKSTLFIQMEYCENRTLYDLIHSENLNQQRDEYWRLFRQILEALSYIHSQGIIHRDLKPMNIFIDESRNVKIGDFGLAKNVHRSLDILKLDSQNLPGSSDNLTSAIGTAMYVATEVLDGTGHYNEKIDMYSLGIIFFEMIYPFSTGMERVNILKKLRSVSIEFPPDFDDNKMKVEKKIIRLLIDHDPNKRPGARTLLNSGWLPVKHQDEVIKEALKSLSNPSSPWQQQVRESLFNQSYSLTNDILFDNSVPTSTPFANILRSQMTEEVVKIFRKHGGIENNAPPRIFPKAPIYGTQNVYEVLDKGGTVLQLQYDLTYPMARYLSKNPSLISKQYRMQHVYRPPDHSRSSLEPRKFGEIDFDIISKSSSESGFYDAESLKIIDEILTVFPVFEKTNTFFILNHADILESVFNFTNIDKAQRPLVSRMLSQVGFARSFKEVKNELKAQLNISSTALNDLELFDFRLDFEAAKKRLYKLMIDSPHLKKIEDSLSHISKVLSYLKPLEVARNVVISPLSNYNSAFYKGGIMFHAVYDDGSSRNMIAAGGRYDTLISFFARPSGKKSSNTRKAVGFNLAWETIFGIAQNYFKLASGNRIKKRNRFLKDTAVDWKPSRCDVLISSFSNSLLDTIGVTILNTLWKQNIKADMLRDCSSVDDVVTGAQQDGIDWILLIKQQAYPLTNHKRKYKPLKIKKLSTNVDIDLDLDEFLTLYQQETGNKSLINDSLTLGDKADEFKRWDENSSAGSSQEGDIDDVVAGSTNNQKVIYVPNMATRSKKANKREKWVYEDAARNSSNMILHNLSNAPIITVDALRDETLEIISITSLAQKEEWLRKVFGSGNNSTPRSFATSIYNNLSKEAHKGNRWAILYCHKTGKSSVIDLQR.

Residues 17-128 enclose the RWD domain; the sequence is NELEAIRSIY…SFTQEKLDEF (112 aa). Positions 149–170 are disordered; sequence KEQLEKEEREKQQETIKKRSDE. Protein kinase domains are found at residues 256 to 527 and 599 to 981; these read LVKP…MKFL and FEEI…SGWL. ATP-binding positions include 605-613 and K628; that span reads LGQGAFGQV. 2 disordered regions span residues 671 to 691 and 727 to 768; these read NVFE…DFEE and FENS…VPRR. Residue S761 is modified to Phosphoserine. Residue D835 is the Proton acceptor of the active site. Residues T882 and T887 each carry the phosphothreonine; by autocatalysis modification. Residues 999–1519 are histidyl-tRNA synthetase-like; that stretch reads NPSSPWQQQV…EFKRWDENSS (521 aa).

It belongs to the protein kinase superfamily. Ser/Thr protein kinase family. GCN2 subfamily. In terms of assembly, homodimer; homodimerization is important for kinase activation by uncharged tRNAs. Interacts (via N-terminal RWD domain) with GCN1 (via N- and C-terminus); this interaction stimulates GCN2 kinase activity in a GCN20-dependent manner in response to amino acid starvation. Interacts (via N-terminus) with the GCN1-GCN20 complex on translating ribosomes in amino acid-starved cells; GCN1 may bind near the ribosomal A-site and promotes the transfer of uncharged tRNAs from the A-site to the tRNA-binding domain in GCN2 for its subsequent kinase activation, and hence allowing GCN4 translational activation and derepression of amino acid biosynthetic genes. Interacts (via C-terminus) with TIF11; this interaction is direct, occurs in amino acid-repleted cells, may be stabilized in a ribosome-dependent manner, reduces GCN2-mediated eIF-2-alpha phosphorylation but not GCN2 autophosphorylation and is lost in amino acid-starved cells and by uncharged tRNAs. Associates (via C-terminus) with ribosomes. It depends on Mg(2+) as a cofactor. In terms of processing, autophosphorylated, autophosphorylation on Thr-882 and Thr-887 increases kinase activity.

Its subcellular location is the cytoplasm. It catalyses the reaction L-seryl-[protein] + ATP = O-phospho-L-seryl-[protein] + ADP + H(+). It carries out the reaction L-threonyl-[protein] + ATP = O-phospho-L-threonyl-[protein] + ADP + H(+). With respect to regulation, the integrated stress response (ISR) is activated in response to conditions that promote ribosome collisions: GCN1, which acts as a ribosome collision sensor, activates GCN2. The RQC pathway and the integrated stress response (ISR) antagonize each other: HEL2 prevents the activation of GCN2, while GCN2 suppresses RQC activation. Ribosome stalling-induced integrated stress response prefers ribosomes with empty A sites. The kinase activity is stimulated upon binding to uncharged tRNAs. In terms of biological role, metabolic-stress sensing protein kinase that phosphorylates the alpha subunit of eukaryotic translation initiation factor 2 (eIF-2-alpha/SUI2) on 'Ser-52' in response to low amino acid, carbon, or purine availability. Required for adapatation to nutrient starvation by acting as a key component of the integrated stress response (ISR), by which cells alter their translational and transcriptional output in response to starvation. Converts phosphorylated eIF-2-alpha/SUI2 either to a competitive inhibitor of translation initiation factor eIF-2B, leading to a global protein synthesis repression, and thus to a reduced overall utilization of amino acids, or to a translational initiation activation of specific mRNAs, such as the transcriptional activator GCN4, and hence allowing GCN4-mediated reprogramming of transcription to alleviate nutrient depletion. Binds uncharged tRNAs. Binds to aminoacylated tRNA(Phe) less tightly than to deacylated tRNA(Phe). Binds to double-stranded RNA. This Saccharomyces cerevisiae (strain ATCC 204508 / S288c) (Baker's yeast) protein is eIF-2-alpha kinase GCN2.